A 370-amino-acid polypeptide reads, in one-letter code: UPF0284 protein PCC7424_2681 (370 aa).

The protein belongs to the UPF0284 family.

This Gloeothece citriformis (strain PCC 7424) (Cyanothece sp. (strain PCC 7424)) protein is UPF0284 protein PCC7424_2681.